The primary structure comprises 207 residues: LexA repressor (207 aa).

A DNA-binding region (H-T-H motif) is located at residues 28–47 (VREIARRFRITPRGAQLHLV). Residues S119 and K156 each act as for autocatalytic cleavage activity in the active site.

This sequence belongs to the peptidase S24 family. Homodimer.

The catalysed reaction is Hydrolysis of Ala-|-Gly bond in repressor LexA.. Represses a number of genes involved in the response to DNA damage (SOS response), including recA and lexA. In the presence of single-stranded DNA, RecA interacts with LexA causing an autocatalytic cleavage which disrupts the DNA-binding part of LexA, leading to derepression of the SOS regulon and eventually DNA repair. The polypeptide is LexA repressor (Thermotoga neapolitana (strain ATCC 49049 / DSM 4359 / NBRC 107923 / NS-E)).